Consider the following 311-residue polypeptide: Methionyl-tRNA formyltransferase (311 aa).

A disordered region spans residues 33–52 (RPDRPAGRGRHQRSSPVREL). 110–113 (SLLP) is a binding site for (6S)-5,6,7,8-tetrahydrofolate.

Belongs to the Fmt family.

It carries out the reaction L-methionyl-tRNA(fMet) + (6R)-10-formyltetrahydrofolate = N-formyl-L-methionyl-tRNA(fMet) + (6S)-5,6,7,8-tetrahydrofolate + H(+). In terms of biological role, attaches a formyl group to the free amino group of methionyl-tRNA(fMet). The formyl group appears to play a dual role in the initiator identity of N-formylmethionyl-tRNA by promoting its recognition by IF2 and preventing the misappropriation of this tRNA by the elongation apparatus. This Parafrankia sp. (strain EAN1pec) protein is Methionyl-tRNA formyltransferase.